The sequence spans 114 residues: Fluoride-specific ion channel FluC 2 (114 aa).

3 consecutive transmembrane segments (helical) span residues 30–50 (FPVATFLVNVAGCLILGLLSG), 57–77 (TFALLGTGFCGGLTTYSTFAV), and 88–108 (ALPSVVYVVASVAAGLAAAWL). The Na(+) site is built by glycine 67 and threonine 70.

Belongs to the fluoride channel Fluc/FEX (TC 1.A.43) family.

It localises to the cell membrane. The enzyme catalyses fluoride(in) = fluoride(out). Its activity is regulated as follows. Na(+) is not transported, but it plays an essential structural role and its presence is essential for fluoride channel function. Fluoride-specific ion channel. Important for reducing fluoride concentration in the cell, thus reducing its toxicity. This is Fluoride-specific ion channel FluC 2 from Rhodococcus jostii (strain RHA1).